Consider the following 204-residue polypeptide: Phosphoribosyl-dephospho-CoA transferase (204 aa).

Catalysis depends on residues Asp-129 and Asp-131.

Belongs to the MdcG family.

The enzyme catalyses apo-[malonate decarboxylase ACP] + 2'-(5''-triphospho-alpha-D-ribosyl)-3'-dephospho-CoA = holo-[malonate decarboxylase ACP] + diphosphate. Transfers 2'-(5-triphosphoribosyl)-3'-dephosphocoenzyme-A to the apo-[acyl-carrier-protein] of the malonate decarboxylase to yield holo-[acyl-carrier-protein]. The polypeptide is Phosphoribosyl-dephospho-CoA transferase (Pseudomonas putida (strain GB-1)).